A 79-amino-acid chain; its full sequence is Short neurotoxin 4 (79 aa).

The first 21 residues, 1–21 (MKTLLLTLVMVTIMCLDLGYT), serve as a signal peptide directing secretion. 3 cysteine pairs are disulfide-bonded: cysteine 24-cysteine 41, cysteine 34-cysteine 59, and cysteine 63-cysteine 71.

Belongs to the three-finger toxin family. Short-chain subfamily. Type III alpha-neurotoxin sub-subfamily. As to expression, expressed by the venom gland.

It is found in the secreted. Binds with high affinity to muscle nicotinic acetylcholine receptor (nAChR) and hinders acetylcholine binding to the receptor, thereby impairing neuromuscular transmission. Causes muscle paralysis, spasms and increased respiration. The protein is Short neurotoxin 4 of Pseudonaja textilis (Eastern brown snake).